Reading from the N-terminus, the 510-residue chain is MKKVIIRKTEEIENWKRNINNEINFIPTMGNLHNGHIKLISTAKNDNSNVNLVSIFINPLQFDNKLDLENYPKTIDNDIKISFSNGADAIFIPSNEDIYPPNNKNIKFLKAPIELSSALCGLNRIGHFDGVCTVVYRLLNLIKPKNLYLGEKDWQQLLILKNLVLKEKLNVAIKSIPTQRDFDGIPLSSRNVHLSKNERKLIRFFSSELLEAKKNFQQEKNINLNEIIKKLSAKKISIEYLEHLHPHTLQKARLEDNISLLAGAIRCGETRLIDHVFLMKRRPIIAIDGPAGSGKSTVTKLIAKKLKLLYLDTGAMYRALSWLLLKENIDYKKEKKLLNIFKDISIVFKSNTNSHQDVYVNNCCVTEEIRSQKISSIVSKISSIKEVRKFLVEEQRKIGESGGLVAEGRDIGTTVFPNAELKIFLTASIDERAKRRKSDKQSKDSQEIDLDTLKELIEKRDFEDSNREISPLIKANDAIEIISDGYTINEVVDKIIDLYNDKIPKETEIK.

Positions 1–276 are pantoate--beta-alanine ligase; the sequence is MKKVIIRKTE…CGETRLIDHV (276 aa). Position 29-36 (29-36) interacts with ATP; the sequence is MGNLHNGH. The active-site Proton donor is the His36. Gln61 is a (R)-pantoate binding site. Beta-alanine is bound at residue Gln61. ATP is bound at residue 150 to 153; it reads GEKD. (R)-pantoate is bound at residue Gln156. 187-190 is an ATP binding site; sequence LSSR. A cytidylate kinase region spans residues 277–510; sequence FLMKRRPIIA…DKIPKETEIK (234 aa).

The protein in the N-terminal section; belongs to the pantothenate synthetase family. It in the C-terminal section; belongs to the cytidylate kinase family. Type 1 subfamily.

Its subcellular location is the cytoplasm. The enzyme catalyses (R)-pantoate + beta-alanine + ATP = (R)-pantothenate + AMP + diphosphate + H(+). It carries out the reaction CMP + ATP = CDP + ADP. The catalysed reaction is dCMP + ATP = dCDP + ADP. Its pathway is cofactor biosynthesis; (R)-pantothenate biosynthesis; (R)-pantothenate from (R)-pantoate and beta-alanine: step 1/1. Its function is as follows. Catalyzes the condensation of pantoate with beta-alanine in an ATP-dependent reaction via a pantoyl-adenylate intermediate. Catalyzes the transfer of a phosphate group from ATP to either CMP or dCMP to form CDP or dCDP and ADP, respectively. The polypeptide is Bifunctional pantoate ligase/cytidylate kinase (Prochlorococcus marinus (strain MIT 9215)).